A 523-amino-acid chain; its full sequence is Coatomer subunit delta-2 (523 aa).

The tract at residues 218–243 (DSFASKPKGRPSAAATAPGKGLGMKL) is disordered. Positions 282–523 (SDPVTVTIEE…RLVTANYQVV (242 aa)) constitute an MHD domain.

It belongs to the adaptor complexes medium subunit family. Delta-COP subfamily. As to quaternary structure, oligomeric complex that consists of at least the alpha, beta, beta', gamma, delta, epsilon and zeta subunits.

The protein localises to the cytoplasm. It localises to the golgi apparatus membrane. Its subcellular location is the cytoplasmic vesicle. It is found in the COPI-coated vesicle membrane. In terms of biological role, the coatomer is a cytosolic protein complex that binds to dilysine motifs and reversibly associates with Golgi non-clathrin-coated vesicles, which further mediate biosynthetic protein transport from the ER, via the Golgi up to the trans Golgi network. Coatomer complex is required for budding from Golgi membranes, and is essential for the retrograde Golgi-to-ER transport of dilysine-tagged proteins. The sequence is that of Coatomer subunit delta-2 from Oryza sativa subsp. japonica (Rice).